Consider the following 474-residue polypeptide: tRNA-2-methylthio-N(6)-dimethylallyladenosine synthase (474 aa).

Residues 3–120 (KKLHIKTWGC…LPDMIDQVRR (118 aa)) form the MTTase N-terminal domain. 6 residues coordinate [4Fe-4S] cluster: Cys12, Cys49, Cys83, Cys157, Cys161, and Cys164. In terms of domain architecture, Radical SAM core spans 143 to 375 (RAEGPTAFVS…QDRITQQAMR (233 aa)). In terms of domain architecture, TRAM spans 378 to 441 (RHMMGTVQRI…TNSLRGKFIR (64 aa)).

The protein belongs to the methylthiotransferase family. MiaB subfamily. In terms of assembly, monomer. [4Fe-4S] cluster is required as a cofactor.

It is found in the cytoplasm. It catalyses the reaction N(6)-dimethylallyladenosine(37) in tRNA + (sulfur carrier)-SH + AH2 + 2 S-adenosyl-L-methionine = 2-methylsulfanyl-N(6)-dimethylallyladenosine(37) in tRNA + (sulfur carrier)-H + 5'-deoxyadenosine + L-methionine + A + S-adenosyl-L-homocysteine + 2 H(+). Catalyzes the methylthiolation of N6-(dimethylallyl)adenosine (i(6)A), leading to the formation of 2-methylthio-N6-(dimethylallyl)adenosine (ms(2)i(6)A) at position 37 in tRNAs that read codons beginning with uridine. The chain is tRNA-2-methylthio-N(6)-dimethylallyladenosine synthase from Shewanella sp. (strain ANA-3).